The following is a 241-amino-acid chain: Carboxy-S-adenosyl-L-methionine synthase (241 aa).

S-adenosyl-L-methionine is bound by residues tyrosine 38, 63-65 (GCS), 88-89 (DN), 116-117 (DI), asparagine 131, and arginine 198.

The protein belongs to the class I-like SAM-binding methyltransferase superfamily. Cx-SAM synthase family. In terms of assembly, homodimer.

The catalysed reaction is prephenate + S-adenosyl-L-methionine = carboxy-S-adenosyl-L-methionine + 3-phenylpyruvate + H2O. In terms of biological role, catalyzes the conversion of S-adenosyl-L-methionine (SAM) to carboxy-S-adenosyl-L-methionine (Cx-SAM). The polypeptide is Carboxy-S-adenosyl-L-methionine synthase (Pasteurella multocida (strain Pm70)).